The chain runs to 362 residues: Putative transport protein BB_0006 (362 aa).

The next 8 membrane-spanning stretches (helical) occupy residues 20 to 40, 43 to 63, 68 to 88, 144 to 164, 212 to 232, 234 to 254, 265 to 285, and 304 to 326; these read FYCIVIVLIFIGAFKIAEAVF, LAISIVLGFLVYPVYTFLARF, FLIVFIIFFLLFSFSYLIFSF, EIIGFTSSLVVVFLLLYFLLS, ILVFIGLTLFGQDFPLVWAVL, FVFNFIPSIGSILAVFFIVIT, IVLYVFIYNTSIQMLIGNILE, and LFFWGWLWGIVGLLISYPFTVIV.

This sequence belongs to the autoinducer-2 exporter (AI-2E) (TC 2.A.86) family.

It localises to the cell membrane. The sequence is that of Putative transport protein BB_0006 from Borreliella burgdorferi (strain ATCC 35210 / DSM 4680 / CIP 102532 / B31) (Borrelia burgdorferi).